A 254-amino-acid chain; its full sequence is MTTALCWQTEGQGSDLVLIHGWGMNGAVWQQLLPLLTPFYRVHWVDMPGYGHSHDISADSIEEMAQLLLDKSPISATWLGWSLGGLVATQAALLAPERVTRLVTVASSPRFAAEGTWRGIQPQVLDDFRRQLGDDFQLTVERFLALQAMGSPTARQDIKLLKQAVLSRPQPNPEALSIGLRLLADVDLRAQLGDITQPWLRLYGRLDGLVPAKVAKDMDQLAPQSCRQIFAAASHAPFISHPEEFVQTLKDFIK.

Residues 16-242 (LVLIHGWGMN…ASHAPFISHP (227 aa)) form the AB hydrolase-1 domain. Substrate contacts are provided by residues W22, 82–83 (SL), and 143–147 (FLALQ). S82 serves as the catalytic Nucleophile. Active-site residues include D207 and H235. A substrate-binding site is contributed by H235.

This sequence belongs to the AB hydrolase superfamily. Carboxylesterase BioH family. As to quaternary structure, monomer.

It is found in the cytoplasm. The catalysed reaction is 6-carboxyhexanoyl-[ACP] methyl ester + H2O = 6-carboxyhexanoyl-[ACP] + methanol + H(+). Its pathway is cofactor biosynthesis; biotin biosynthesis. In terms of biological role, the physiological role of BioH is to remove the methyl group introduced by BioC when the pimeloyl moiety is complete. It allows to synthesize pimeloyl-ACP via the fatty acid synthetic pathway through the hydrolysis of the ester bonds of pimeloyl-ACP esters. The protein is Pimeloyl-[acyl-carrier protein] methyl ester esterase of Photobacterium profundum (strain SS9).